We begin with the raw amino-acid sequence, 153 residues long: UPF0266 membrane protein YPTB1631 (153 aa).

Transmembrane regions (helical) follow at residues 6 to 26 (LVLV…EFIM), 45 to 65 (LDCM…VMAH), and 67 to 87 (APLT…ISYI).

This sequence belongs to the UPF0266 family.

The protein localises to the cell inner membrane. This is UPF0266 membrane protein YPTB1631 from Yersinia pseudotuberculosis serotype I (strain IP32953).